The primary structure comprises 559 residues: Endoglin (559 aa).

The first 20 residues, 1–20, serve as a signal peptide directing secretion; sequence MKSICCVLVLCLLLCRRSTA. The Extracellular portion of the chain corresponds to 21-473; the sequence is SESICELKDV…SCFEFGLSAV (453 aa). Disulfide bonds link Cys-25/Cys-201 and Cys-47/Cys-174. N-linked (GlcNAc...) asparagine glycans are attached at residues Asn-55, Asn-79, Asn-109, Asn-133, Asn-170, Asn-302, and Asn-352. Cys-381 and Cys-427 are oxidised to a cystine. Residues 474–494 form a helical membrane-spanning segment; sequence LGIAFGGFLIGVLLTGALWFI. The Cytoplasmic segment spans residues 495 to 559; the sequence is KIRTGHPVAL…TQSTPTSSMA (65 aa). The segment at 528–559 is disordered; that stretch reads RQPVPTHPSPSENSSANASIGSTQSTPTSSMA. A compositionally biased stretch (low complexity) spans 536 to 546; the sequence is SPSENSSANAS. A compositionally biased stretch (polar residues) spans 547-559; the sequence is IGSTQSTPTSSMA.

In terms of assembly, homodimer; disulfide-linked.

It localises to the cell membrane. Vascular endothelium glycoprotein that plays an important role in the regulation of angiogenesis. Required for normal structure and integrity of adult vasculature. Important for endothelial cell shape changes in response to blood flow, which drive vascular remodeling and establishment of normal vascular morphology during angiogenesis. In Danio rerio (Zebrafish), this protein is Endoglin.